The primary structure comprises 130 residues: Small ribosomal subunit protein uS9 (130 aa).

The protein belongs to the universal ribosomal protein uS9 family.

The polypeptide is Small ribosomal subunit protein uS9 (Streptococcus mutans serotype c (strain ATCC 700610 / UA159)).